Consider the following 422-residue polypeptide: Protein FAM53B (422 aa).

Phosphoserine is present on residues S118, S167, S169, S179, S212, and S268. Low complexity predominate over residues 245–268 (SANSTPASTPELARRSSGLSRSRS). Residues 245 to 269 (SANSTPASTPELARRSSGLSRSRSQ) form a disordered region. The short motif at 281-284 (KRRR) is the Nuclear localization signal element.

The protein belongs to the FAM53 family. Interacts with CTNNB1. Detected in skeletal muscle, kidney, spleen, thyroid, testis, ovary, small intestine, colon and peripheral blood.

Its subcellular location is the nucleus. Functionally, acts as a regulator of Wnt signaling pathway by regulating beta-catenin (CTNNB1) nuclear localization. The protein is Protein FAM53B of Homo sapiens (Human).